The following is a 465-amino-acid chain: Cysteine--tRNA ligase (465 aa).

C29 provides a ligand contact to Zn(2+). The 'HIGH' region signature appears at 31 to 41 (PTVYNYIHIGN). Residues C209, H234, and E238 each contribute to the Zn(2+) site. The 'KMSKS' region signature appears at 266–270 (KMSKS). K269 is an ATP binding site. Phosphoserine is present on S270.

This sequence belongs to the class-I aminoacyl-tRNA synthetase family. As to quaternary structure, monomer. It depends on Zn(2+) as a cofactor.

Its subcellular location is the cytoplasm. The enzyme catalyses tRNA(Cys) + L-cysteine + ATP = L-cysteinyl-tRNA(Cys) + AMP + diphosphate. The chain is Cysteine--tRNA ligase from Bacillus thuringiensis (strain Al Hakam).